The following is a 148-amino-acid chain: 3-dehydroquinate dehydratase (148 aa).

Catalysis depends on Tyr-23, which acts as the Proton acceptor. Substrate contacts are provided by Asn-74, His-80, and Asp-87. His-100 serves as the catalytic Proton donor. Residues 101–102 and Arg-111 contribute to the substrate site; that span reads IS.

It belongs to the type-II 3-dehydroquinase family. As to quaternary structure, homododecamer.

It carries out the reaction 3-dehydroquinate = 3-dehydroshikimate + H2O. The protein operates within metabolic intermediate biosynthesis; chorismate biosynthesis; chorismate from D-erythrose 4-phosphate and phosphoenolpyruvate: step 3/7. Functionally, catalyzes a trans-dehydration via an enolate intermediate. This is 3-dehydroquinate dehydratase from Caldanaerobacter subterraneus subsp. tengcongensis (strain DSM 15242 / JCM 11007 / NBRC 100824 / MB4) (Thermoanaerobacter tengcongensis).